The primary structure comprises 259 residues: Glucosamine-6-phosphate deaminase (259 aa).

Residue Asp66 is the Proton acceptor; for enolization step of the active site. Asp135 serves as the catalytic For ring-opening step. His137 acts as the Proton acceptor; for ring-opening step in catalysis. Glu142 (for ring-opening step) is an active-site residue.

This sequence belongs to the glucosamine/galactosamine-6-phosphate isomerase family. NagB subfamily.

The enzyme catalyses alpha-D-glucosamine 6-phosphate + H2O = beta-D-fructose 6-phosphate + NH4(+). Its pathway is amino-sugar metabolism; N-acetylneuraminate degradation; D-fructose 6-phosphate from N-acetylneuraminate: step 5/5. In terms of biological role, catalyzes the reversible isomerization-deamination of glucosamine 6-phosphate (GlcN6P) to form fructose 6-phosphate (Fru6P) and ammonium ion. The sequence is that of Glucosamine-6-phosphate deaminase from Rhodococcus opacus (strain B4).